The primary structure comprises 230 residues: Large ribosomal subunit protein uL1 (230 aa).

Belongs to the universal ribosomal protein uL1 family. Part of the 50S ribosomal subunit.

In terms of biological role, binds directly to 23S rRNA. The L1 stalk is quite mobile in the ribosome, and is involved in E site tRNA release. Protein L1 is also a translational repressor protein, it controls the translation of the L11 operon by binding to its mRNA. The polypeptide is Large ribosomal subunit protein uL1 (Leptospira borgpetersenii serovar Hardjo-bovis (strain JB197)).